The sequence spans 502 residues: RNA-splicing ligase RtcB homolog 2 (502 aa).

Mn(2+)-binding residues include Asp120, Cys123, His228, His260, and His354. 227 to 231 (NHYAE) contributes to the GMP binding site. Residues 354–355 (HN), 403–406 (GGSM), Ser410, and 429–432 (HGAG) each bind GMP. His429 serves as the catalytic GMP-histidine intermediate.

It belongs to the RtcB family. Catalytic component of the tRNA-splicing ligase complex. The cofactor is Mn(2+).

The catalysed reaction is a 3'-end 3'-phospho-ribonucleotide-RNA + a 5'-end dephospho-ribonucleoside-RNA + GTP = a ribonucleotidyl-ribonucleotide-RNA + GMP + diphosphate. It carries out the reaction a 3'-end 2',3'-cyclophospho-ribonucleotide-RNA + a 5'-end dephospho-ribonucleoside-RNA + GTP + H2O = a ribonucleotidyl-ribonucleotide-RNA + GMP + diphosphate + H(+). Catalytic subunit of the tRNA-splicing ligase complex that acts by directly joining spliced tRNA halves to mature-sized tRNAs by incorporating the precursor-derived splice junction phosphate into the mature tRNA as a canonical 3',5'-phosphodiester. May act as an RNA ligase with broad substrate specificity, and may function toward other RNAs. The sequence is that of RNA-splicing ligase RtcB homolog 2 from Culex quinquefasciatus (Southern house mosquito).